Reading from the N-terminus, the 328-residue chain is Sin3 histone deacetylase corepressor complex component SDS3 (328 aa).

Residues 1–64 are disordered; it reads MSAAALLAPA…TDLAKHDEED (64 aa). N-acetylserine is present on Ser2. Residues 2–170 form a mediates interaction with USP17L2 region; it reads SAAALLAPAP…IENEKLTMEL (169 aa). A compositionally biased stretch (pro residues) spans 10-21; the sequence is APAPAGAPPAPE. Composition is skewed to acidic residues over residues 23-37 and 45-54; these read YPEE…EDDE and SDEDTEDASE. Phosphoserine is present on residues Ser32 and Ser45. Thr49 is modified (phosphothreonine). Ser53 is subject to Phosphoserine. Residues 64–171 adopt a coiled-coil conformation; it reads DFVEMKEQMY…ENEKLTMELT (108 aa). Glycyl lysine isopeptide (Lys-Gly) (interchain with G-Cter in SUMO2) cross-links involve residues Lys69, Lys178, and Lys201. Positions 226-252 are disordered; that stretch reads LKSPKRPASPSSPEHLPTTPAESPAQR. 3 positions are modified to phosphoserine: Ser228, Ser234, and Ser237. Thr244 is subject to Phosphothreonine.

This sequence belongs to the SDS3 family. In terms of assembly, homodimer. Component of the SIN3 histone deacetylase (HDAC) corepressor complex. Interacts with SIN3A. Interaction with SIN3B enhances the interaction between SIN3B and HDAC1 to form a complex. Interacts with HCFC1. Component of a mSin3A corepressor complex that contains SIN3A, SAP130, SUDS3/SAP45, ARID4B/SAP180, HDAC1 and HDAC2. Interacts with USP17L2; the interaction is direct. Interacts with FOXK2. Post-translationally, polyubiquitinated. 'Lys-63'-polyubiquitinated SUDS3 positively regulates histone deacetylation. Regulated through deubiquitination by USP17L2/USP17 that cleaves 'Lys-63'-linked ubiquitin chains.

It localises to the nucleus. Its function is as follows. Regulatory protein which represses transcription and augments histone deacetylase activity of HDAC1. May have a potential role in tumor suppressor pathways through regulation of apoptosis. May function in the assembly and/or enzymatic activity of the mSin3A corepressor complex or in mediating interactions between the complex and other regulatory complexes. This chain is Sin3 histone deacetylase corepressor complex component SDS3 (SUDS3), found in Bos taurus (Bovine).